The chain runs to 311 residues: tRNA-cytidine(32) 2-sulfurtransferase (311 aa).

Positions Ser-47–Ser-52 match the PP-loop motif motif. Residues Cys-122, Cys-125, and Cys-213 each coordinate [4Fe-4S] cluster.

Belongs to the TtcA family. Homodimer. Mg(2+) is required as a cofactor. It depends on [4Fe-4S] cluster as a cofactor.

The protein localises to the cytoplasm. The catalysed reaction is cytidine(32) in tRNA + S-sulfanyl-L-cysteinyl-[cysteine desulfurase] + AH2 + ATP = 2-thiocytidine(32) in tRNA + L-cysteinyl-[cysteine desulfurase] + A + AMP + diphosphate + H(+). The protein operates within tRNA modification. In terms of biological role, catalyzes the ATP-dependent 2-thiolation of cytidine in position 32 of tRNA, to form 2-thiocytidine (s(2)C32). The sulfur atoms are provided by the cysteine/cysteine desulfurase (IscS) system. The protein is tRNA-cytidine(32) 2-sulfurtransferase of Escherichia coli O45:K1 (strain S88 / ExPEC).